The chain runs to 423 residues: L-cysteine:1D-myo-inositol 2-amino-2-deoxy-alpha-D-glucopyranoside ligase (423 aa).

C45 is a Zn(2+) binding site. Residues 45–48, T60, and 83–85 contribute to the L-cysteinyl-5'-AMP site; these read CGIT and NVT. The 'HIGH' region motif lies at 47-57; sequence ITPYDATHIGH. The 'ERGGDP' region signature appears at 197–202; that stretch reads DRGGDP. W238 is an L-cysteinyl-5'-AMP binding site. C242 provides a ligand contact to Zn(2+). 260 to 262 lines the L-cysteinyl-5'-AMP pocket; it reads GSD. A Zn(2+)-binding site is contributed by H267. An L-cysteinyl-5'-AMP-binding site is contributed by I294. Residues 300 to 304 carry the 'KMSKS' region motif; sequence KMSKS.

It belongs to the class-I aminoacyl-tRNA synthetase family. MshC subfamily. In terms of assembly, monomer. Zn(2+) serves as cofactor.

The catalysed reaction is 1D-myo-inositol 2-amino-2-deoxy-alpha-D-glucopyranoside + L-cysteine + ATP = 1D-myo-inositol 2-(L-cysteinylamino)-2-deoxy-alpha-D-glucopyranoside + AMP + diphosphate + H(+). Its function is as follows. Catalyzes the ATP-dependent condensation of GlcN-Ins and L-cysteine to form L-Cys-GlcN-Ins. The polypeptide is L-cysteine:1D-myo-inositol 2-amino-2-deoxy-alpha-D-glucopyranoside ligase (Jonesia denitrificans (strain ATCC 14870 / DSM 20603 / BCRC 15368 / CIP 55.134 / JCM 11481 / NBRC 15587 / NCTC 10816 / Prevot 55134) (Listeria denitrificans)).